A 239-amino-acid chain; its full sequence is Pyridoxine 5'-phosphate synthase (239 aa).

Asn7 provides a ligand contact to 3-amino-2-oxopropyl phosphate. Residue 9–10 (DH) coordinates 1-deoxy-D-xylulose 5-phosphate. Arg18 provides a ligand contact to 3-amino-2-oxopropyl phosphate. Catalysis depends on His43, which acts as the Proton acceptor. 2 residues coordinate 1-deoxy-D-xylulose 5-phosphate: Arg45 and His50. Glu70 (proton acceptor) is an active-site residue. Position 100 (Thr100) interacts with 1-deoxy-D-xylulose 5-phosphate. The active-site Proton donor is the His191. 3-amino-2-oxopropyl phosphate is bound by residues Gly192 and 213 to 214 (GH).

It belongs to the PNP synthase family. Homooctamer; tetramer of dimers.

It is found in the cytoplasm. The enzyme catalyses 3-amino-2-oxopropyl phosphate + 1-deoxy-D-xylulose 5-phosphate = pyridoxine 5'-phosphate + phosphate + 2 H2O + H(+). It participates in cofactor biosynthesis; pyridoxine 5'-phosphate biosynthesis; pyridoxine 5'-phosphate from D-erythrose 4-phosphate: step 5/5. Functionally, catalyzes the complicated ring closure reaction between the two acyclic compounds 1-deoxy-D-xylulose-5-phosphate (DXP) and 3-amino-2-oxopropyl phosphate (1-amino-acetone-3-phosphate or AAP) to form pyridoxine 5'-phosphate (PNP) and inorganic phosphate. In Pelobacter propionicus (strain DSM 2379 / NBRC 103807 / OttBd1), this protein is Pyridoxine 5'-phosphate synthase.